The chain runs to 179 residues: Large ribosomal subunit protein uL6 (179 aa).

The protein belongs to the universal ribosomal protein uL6 family. Part of the 50S ribosomal subunit.

This protein binds to the 23S rRNA, and is important in its secondary structure. It is located near the subunit interface in the base of the L7/L12 stalk, and near the tRNA binding site of the peptidyltransferase center. The polypeptide is Large ribosomal subunit protein uL6 (Mycoplasmopsis pulmonis (strain UAB CTIP) (Mycoplasma pulmonis)).